The primary structure comprises 329 residues: MTALDIEEIPGVGPATADRLRDAGYITVESIATATPVDLAEAAELGESTTKKIIKAAREMADIGGFKTGTDILARRQDVLKLKTLVPEIDELFGGGLETQAITELYGEFGSGKSQIAHQLAVNCQLPQELGGLGGSCLYIDTENTFRPERIEQMAEGLELADLPEGYVVPTPDEFLANIHVARAHSSDHQMLLIDAARELSNELTASGLPVKLVIIDSLTSLFRSEYAGRGTLAGRQQKLNRHMHDLFKLVDDLNAVALVTNQVMANPGLLFGDPTKPIGGNIVGHTATYRVYLRKSKAGKRIARLVDSPNLPEGEATFMVETAGIKPC.

107–114 lines the ATP pocket; sequence GEFGSGKS.

It belongs to the eukaryotic RecA-like protein family.

Functionally, involved in DNA repair and in homologous recombination. Binds and assemble on single-stranded DNA to form a nucleoprotein filament. Hydrolyzes ATP in a ssDNA-dependent manner and promotes DNA strand exchange between homologous DNA molecules. This chain is DNA repair and recombination protein RadA, found in Methanocorpusculum labreanum (strain ATCC 43576 / DSM 4855 / Z).